The following is a 273-amino-acid chain: Chaperone protein PsaB (273 aa).

The N-terminal stretch at 1–31 (MKNLFFSAYKKVFSYITSIVIFMVSLPYAYS) is a signal peptide. The cysteines at positions 128 and 163 are disulfide-linked.

The protein belongs to the periplasmic pilus chaperone family.

The protein resides in the periplasm. Functionally, required for the biogenesis of the pH 6 antigen. This chain is Chaperone protein PsaB (psaB), found in Yersinia pestis.